The primary structure comprises 331 residues: Putative T-box protein 36 (331 aa).

Positions 29–210 (EITKKQWNQL…MNRFSRKRKY (182 aa)) form a DNA-binding region, T-box.

Its subcellular location is the nucleus. The sequence is that of Putative T-box protein 36 (tbx-36) from Caenorhabditis elegans.